The sequence spans 873 residues: Polyribonucleotide nucleotidyltransferase (873 aa).

Mg(2+) is bound by residues Asp-521 and Asp-527. One can recognise a KH domain in the interval 587–646; that stretch reads PRIITTTVPVDKIGEVIGPKGKMINQIQEDTGAEIAIEDDGTVYISSEGGEAAEKAKQII. One can recognise an S1 motif domain in the interval 658-730; that stretch reads GETYKGTVVK…DRGKISLAIP (73 aa). The tract at residues 727–873 is disordered; the sequence is LAIPGFENQE…VRRDFDPFDD (147 aa). The segment covering 742-857 has biased composition (basic and acidic residues); that stretch reads RRSDDRPRRD…EYREGREVRH (116 aa).

The protein belongs to the polyribonucleotide nucleotidyltransferase family. Requires Mg(2+) as cofactor.

It localises to the cytoplasm. The catalysed reaction is RNA(n+1) + phosphate = RNA(n) + a ribonucleoside 5'-diphosphate. In terms of biological role, involved in mRNA degradation. Catalyzes the phosphorolysis of single-stranded polyribonucleotides processively in the 3'- to 5'-direction. The chain is Polyribonucleotide nucleotidyltransferase from Bifidobacterium animalis subsp. lactis (strain AD011).